The chain runs to 421 residues: Probable UDP-arabinose 4-epimerase 1 (421 aa).

Residues 1–33 (MLPTNRNRPQQRPARSWYFISDMDFSDPKRKPR) lie on the Cytoplasmic side of the membrane. Residues 34 to 53 (YLSKILMVALLTAMCVVMLT) traverse the membrane as a helical; Signal-anchor for type II membrane protein segment. Residues 54-421 (QPPCHRRTPS…GYGPPQAMVL (368 aa)) are Lumenal-facing. 74 to 105 (HVLVTGGAGYIGSHAALRLLKDSFRVTIVDNL) contacts NAD(+). The Proton acceptor role is filled by Tyr222.

The protein belongs to the NAD(P)-dependent epimerase/dehydratase family. The cofactor is NAD(+).

It is found in the golgi apparatus. It localises to the golgi stack membrane. The enzyme catalyses UDP-beta-L-arabinopyranose = UDP-alpha-D-xylose. Its pathway is nucleotide-sugar biosynthesis; UDP-L-arabinose biosynthesis; UDP-L-arabinose from UDP-alpha-D-xylose: step 1/1. It participates in cell wall biogenesis; cell wall polysaccharide biosynthesis. The polypeptide is Probable UDP-arabinose 4-epimerase 1 (UEL-1) (Oryza sativa subsp. japonica (Rice)).